A 380-amino-acid chain; its full sequence is Chaperone protein DnaJ (380 aa).

One can recognise a J domain in the interval 5–72; sequence DYYDTLGVPK…QKRAAYDQYG (68 aa). The interval 21 to 47 is disordered; sequence IKKAYRKLAMKHHPDRNQGDTSKVSED. Over residues 24 to 34 the composition is skewed to basic residues; that stretch reads AYRKLAMKHHP. The segment covering 35-47 has biased composition (basic and acidic residues); it reads DRNQGDTSKVSED. A CR-type zinc finger spans residues 139-217; the sequence is GKEAQIRIPS…CHGVGKTKNN (79 aa). The Zn(2+) site is built by Cys152, Cys155, Cys169, Cys172, Cys191, Cys194, Cys205, and Cys208. CXXCXGXG motif repeat units lie at residues 152 to 159, 169 to 176, 191 to 198, and 205 to 212; these read CGICHGTG, CTTCHGHG, CPQCKGSG, and CVACHGVG.

Belongs to the DnaJ family. As to quaternary structure, homodimer. Zn(2+) serves as cofactor.

Its subcellular location is the cytoplasm. Participates actively in the response to hyperosmotic and heat shock by preventing the aggregation of stress-denatured proteins and by disaggregating proteins, also in an autonomous, DnaK-independent fashion. Unfolded proteins bind initially to DnaJ; upon interaction with the DnaJ-bound protein, DnaK hydrolyzes its bound ATP, resulting in the formation of a stable complex. GrpE releases ADP from DnaK; ATP binding to DnaK triggers the release of the substrate protein, thus completing the reaction cycle. Several rounds of ATP-dependent interactions between DnaJ, DnaK and GrpE are required for fully efficient folding. Also involved, together with DnaK and GrpE, in the DNA replication of plasmids through activation of initiation proteins. The protein is Chaperone protein DnaJ of Polaromonas naphthalenivorans (strain CJ2).